A 586-amino-acid chain; its full sequence is Membrane protein insertase YidC (586 aa).

5 helical membrane-spanning segments follow: residues 5 to 25 (TLIGLVLIALIMMAWFQLMAP), 371 to 391 (GVIIILFALFIKLVTYPLTMA), 436 to 456 (LGGCLPTVIQMPLLFAMFYVF), 486 to 506 (IPLYGDHVSVIPILMGVAVFF), and 522 to 542 (FMMYLFPGMMLIFFNNMPSGL).

This sequence belongs to the OXA1/ALB3/YidC family. Type 1 subfamily. Interacts with the Sec translocase complex via SecD. Specifically interacts with transmembrane segments of nascent integral membrane proteins during membrane integration.

It is found in the cell inner membrane. Its function is as follows. Required for the insertion and/or proper folding and/or complex formation of integral membrane proteins into the membrane. Involved in integration of membrane proteins that insert both dependently and independently of the Sec translocase complex, as well as at least some lipoproteins. Aids folding of multispanning membrane proteins. This Chloroherpeton thalassium (strain ATCC 35110 / GB-78) protein is Membrane protein insertase YidC.